Consider the following 366-residue polypeptide: Class I histocompatibility antigen, Gogo-C*0203 alpha chain (366 aa).

Positions 1-24 (MRVMAPRTLILLLSGALALTETWA) are cleaved as a signal peptide. The alpha-1 stretch occupies residues 25–114 (GSHSMRYFYT…LRGYYNQSED (90 aa)). Topologically, residues 25 to 308 (GSHSMRYFYT…EPSSQPTIPI (284 aa)) are extracellular. N110 is a glycosylation site (N-linked (GlcNAc...) asparagine). The alpha-2 stretch occupies residues 115–206 (GSHTLQSMYG…ENGKETLQRA (92 aa)). 2 cysteine pairs are disulfide-bonded: C125/C188 and C227/C283. The interval 207-298 (EPPKTHVTHH…GLPEPLTLRW (92 aa)) is alpha-3. Positions 209–297 (PKTHVTHHPL…EGLPEPLTLR (89 aa)) constitute an Ig-like C1-type domain. The interval 299-308 (EPSSQPTIPI) is connecting peptide. Residues 309 to 332 (VGIVVGLAVLVVLAVLGAVVTAMM) traverse the membrane as a helical segment. The Cytoplasmic segment spans residues 333–366 (CRRKSSGGKGGSCSQAACSNSAQGSDESLITCKA).

It belongs to the MHC class I family. As to quaternary structure, heterodimer of an alpha chain and a beta chain (beta-2-microglobulin).

It is found in the membrane. Involved in the presentation of foreign antigens to the immune system. The protein is Class I histocompatibility antigen, Gogo-C*0203 alpha chain of Gorilla gorilla gorilla (Western lowland gorilla).